The sequence spans 310 residues: Probable manganese-dependent inorganic pyrophosphatase (310 aa).

The Mn(2+) site is built by His-9, Asp-13, Asp-15, Asp-75, His-97, and Asp-149.

The protein belongs to the PPase class C family. The cofactor is Mn(2+).

It localises to the cytoplasm. It carries out the reaction diphosphate + H2O = 2 phosphate + H(+). The polypeptide is Probable manganese-dependent inorganic pyrophosphatase (Brevibacillus brevis (strain 47 / JCM 6285 / NBRC 100599)).